We begin with the raw amino-acid sequence, 360 residues long: Phospho-N-acetylmuramoyl-pentapeptide-transferase (360 aa).

The next 10 helical transmembrane spans lie at 21–41 (YLTL…FIVG), 70–90 (GTPT…TLLW), 97–117 (YVWA…VDDY), 134–154 (YLWQ…TASS), 168–188 (VVLN…VGSS), 199–219 (GLAI…AYAS), 236–256 (AGEL…FLWF), 263–283 (VFMG…VAVL), 288–308 (IVLM…MLQV), and 338–358 (VIVR…ATLK).

This sequence belongs to the glycosyltransferase 4 family. MraY subfamily. The cofactor is Mg(2+).

It localises to the cell inner membrane. The catalysed reaction is UDP-N-acetyl-alpha-D-muramoyl-L-alanyl-gamma-D-glutamyl-meso-2,6-diaminopimeloyl-D-alanyl-D-alanine + di-trans,octa-cis-undecaprenyl phosphate = di-trans,octa-cis-undecaprenyl diphospho-N-acetyl-alpha-D-muramoyl-L-alanyl-D-glutamyl-meso-2,6-diaminopimeloyl-D-alanyl-D-alanine + UMP. It functions in the pathway cell wall biogenesis; peptidoglycan biosynthesis. Its function is as follows. Catalyzes the initial step of the lipid cycle reactions in the biosynthesis of the cell wall peptidoglycan: transfers peptidoglycan precursor phospho-MurNAc-pentapeptide from UDP-MurNAc-pentapeptide onto the lipid carrier undecaprenyl phosphate, yielding undecaprenyl-pyrophosphoryl-MurNAc-pentapeptide, known as lipid I. This Methylococcus capsulatus (strain ATCC 33009 / NCIMB 11132 / Bath) protein is Phospho-N-acetylmuramoyl-pentapeptide-transferase.